A 183-amino-acid chain; its full sequence is Potassium-transporting ATPase KdpC subunit (183 aa).

Residues 10–30 form a helical membrane-spanning segment; it reads ASLLVLSLVTGVAYPLLVTGI.

It belongs to the KdpC family. The system is composed of three essential subunits: KdpA, KdpB and KdpC.

It localises to the cell inner membrane. In terms of biological role, part of the high-affinity ATP-driven potassium transport (or Kdp) system, which catalyzes the hydrolysis of ATP coupled with the electrogenic transport of potassium into the cytoplasm. This subunit acts as a catalytic chaperone that increases the ATP-binding affinity of the ATP-hydrolyzing subunit KdpB by the formation of a transient KdpB/KdpC/ATP ternary complex. The sequence is that of Potassium-transporting ATPase KdpC subunit from Pseudomonas aeruginosa (strain UCBPP-PA14).